The following is a 166-amino-acid chain: Large ribosomal subunit protein uL10 (166 aa).

This sequence belongs to the universal ribosomal protein uL10 family. As to quaternary structure, part of the ribosomal stalk of the 50S ribosomal subunit. The N-terminus interacts with L11 and the large rRNA to form the base of the stalk. The C-terminus forms an elongated spine to which L12 dimers bind in a sequential fashion forming a multimeric L10(L12)X complex.

Forms part of the ribosomal stalk, playing a central role in the interaction of the ribosome with GTP-bound translation factors. The chain is Large ribosomal subunit protein uL10 from Aromatoleum aromaticum (strain DSM 19018 / LMG 30748 / EbN1) (Azoarcus sp. (strain EbN1)).